The following is a 449-amino-acid chain: UPF0761 membrane protein Cpha266_1653 (449 aa).

The next 6 helical transmembrane spans lie at 77-97 (LLSL…FPVF), 133-153 (SVPL…ISTI), 173-193 (FTLY…SLVA), 214-234 (LLSF…YMLV), 244-264 (AVYG…WFVF), and 277-297 (GALS…VVVL).

This sequence belongs to the UPF0761 family.

It localises to the cell inner membrane. The sequence is that of UPF0761 membrane protein Cpha266_1653 from Chlorobium phaeobacteroides (strain DSM 266 / SMG 266 / 2430).